A 247-amino-acid polypeptide reads, in one-letter code: MDQIRQLAQWIKEANTIAVLTGAGMSTESGIPDFRSENGLYAQEDNVEYYLSEYYYKKDPVDFWRRFKRMFSLKMMGGFAPNDGHRFLRWLEEMGKTVTILTQNIDGLHTKAGSTNVIELHGTLQTATCPSCGNKYDLSFINRHEVPRCEKCQTIVKPDVVLFGGLVPRMEEAFAAAAASDLLLAMGTSLEVAPVNQIPFYVAAESPATRKVLINKTATRMDGMFDLVIYGGIGKTVASVRKQIQAE.

Residues 1-247 (MDQIRQLAQW…ASVRKQIQAE (247 aa)) enclose the Deacetylase sirtuin-type domain. Residues alanine 23, threonine 27, phenylalanine 34, arginine 35, glutamine 103, isoleucine 105, aspartate 106, and histidine 121 each coordinate NAD(+). Phenylalanine 34 provides a ligand contact to nicotinamide. Nicotinamide contacts are provided by isoleucine 105 and aspartate 106. Histidine 121 acts as the Proton acceptor in catalysis. Positions 129, 132, 149, and 152 each coordinate Zn(2+). NAD(+) is bound by residues threonine 188, serine 189, asparagine 215, and isoleucine 233.

It belongs to the sirtuin family. Class U subfamily. Zn(2+) is required as a cofactor.

The protein localises to the cytoplasm. It carries out the reaction N(6)-acetyl-L-lysyl-[protein] + NAD(+) + H2O = 2''-O-acetyl-ADP-D-ribose + nicotinamide + L-lysyl-[protein]. NAD-dependent protein deacetylase which modulates the activities of several enzymes which are inactive in their acetylated form. In Geobacillus kaustophilus (strain HTA426), this protein is NAD-dependent protein deacetylase 2.